A 206-amino-acid chain; its full sequence is AT-hook motif nuclear-localized protein 28 (206 aa).

Disordered regions lie at residues 1–21 (METV…PKAP) and 160–206 (TEEE…PSPY). Residues 5 to 17 (GRPRGRPRGSKNK) constitute a DNA-binding region (a.T hook). Residues 7–18 (PRGRPRGSKNKP) show a composition bias toward basic residues. A PPC domain is found at 27–173 (DPPMSPYILE…QRNSAEGEEE (147 aa)).

The protein localises to the nucleus. Functionally, transcription factor that specifically binds AT-rich DNA sequences related to the nuclear matrix attachment regions (MARs). This Arabidopsis thaliana (Mouse-ear cress) protein is AT-hook motif nuclear-localized protein 28.